Consider the following 359-residue polypeptide: Archaemetzincin-2 (359 aa).

Position 254 (His-254) interacts with Zn(2+). The active-site Proton acceptor is Glu-255. Zn(2+)-binding residues include His-258, His-264, Cys-265, Cys-270, Cys-289, and Cys-292.

Belongs to the peptidase M54 family. The cofactor is Zn(2+).

Its function is as follows. Probable zinc metalloprotease. This is Archaemetzincin-2 (Amz2) from Rattus norvegicus (Rat).